A 146-amino-acid polypeptide reads, in one-letter code: Negative cofactor 2 complex subunit beta (146 aa).

The tract at residues 124-146 is disordered; that stretch reads FRQSRSRLHHNSVSDPVKSEDSS. 3 positions are modified to phosphoserine: Ser-135, Ser-137, and Ser-142.

As to quaternary structure, component of the NC2 (negative cofactor 2) complex composed of BUR6 and NCB2. The NC2 complex associates with SPT15/TBP. Interacts with SPT15/TBP.

The protein resides in the nucleus. Component of the NC2 complex which represses RNA polymerase II transcription through binding to SPT15/TBP and thereby inhibiting the assembly of the preinitiation complex. The NC2 complex may also mediate transcriptional activation from TATA-driven promoters through association with SPT15/TBP. This chain is Negative cofactor 2 complex subunit beta (NCB2), found in Saccharomyces cerevisiae (strain ATCC 204508 / S288c) (Baker's yeast).